Reading from the N-terminus, the 105-residue chain is D-galactoside-specific lectin (105 aa).

The SUEL-type lectin domain occupies 13-103 (VCEDSSLTIS…KYLAVTYICS (91 aa)).

As to quaternary structure, homodimer; disulfide-linked.

It localises to the cytoplasm. Its function is as follows. This protein binds D-galactoside. May have an important role in the activation of eggs (triggered by fertilization), or in their subsequent differentiation. The dimeric form is essential for hemagglutination activity. The chain is D-galactoside-specific lectin from Heliocidaris crassispina (Sea urchin).